Here is a 345-residue protein sequence, read N- to C-terminus: Phosphoribosylformylglycinamidine cyclo-ligase (345 aa).

It belongs to the AIR synthase family.

The protein localises to the cytoplasm. It catalyses the reaction 2-formamido-N(1)-(5-O-phospho-beta-D-ribosyl)acetamidine + ATP = 5-amino-1-(5-phospho-beta-D-ribosyl)imidazole + ADP + phosphate + H(+). It functions in the pathway purine metabolism; IMP biosynthesis via de novo pathway; 5-amino-1-(5-phospho-D-ribosyl)imidazole from N(2)-formyl-N(1)-(5-phospho-D-ribosyl)glycinamide: step 2/2. This is Phosphoribosylformylglycinamidine cyclo-ligase from Escherichia fergusonii (strain ATCC 35469 / DSM 13698 / CCUG 18766 / IAM 14443 / JCM 21226 / LMG 7866 / NBRC 102419 / NCTC 12128 / CDC 0568-73).